Reading from the N-terminus, the 492-residue chain is MEHSVPKNKLKKLSEDSLTKQPEEVFDVLEKLGEGSYGSVFKAIHKESGQVVAIKQVPVESDLQEIIKEISIMQQCDSPYVVKYYGSYFKNTDLWIVMEYCGAGSVSDIIRLRNKTLTEDEIATVLKSTLKGLEYLHFMRKIHRDIKAGNILLNTEGHAKLADFGVAGQLTDTMAKRNTVIGTPFWMAPEVIQEIGYNCVADIWSLGITSIEMAEGKPPYADIHPMRAIFMIPTNPPPTFRKPEHWSDDFTDFVKKCLVKNPEQRATATQLLQHPFIVGAKPVSILRDLITEAMDMKAKRQQEQQRELEEDDENSEEEVEVDSHTMVKSGSESAGTMRATGTMSDGAQTMIEHGSTMLESNLGTMVINSDDEEEEEDLGSMRRNPTSQQIQRPSFMDYFDKQDSNKAQEGFNHNQQDPCLISKTAFPDNWKVPQDGDFDFLKNLDFEELQMRLTALDPMMEREIEELRQRYTAKRQPILDAMDAKKRRQQNF.

Residues 26–277 form the Protein kinase domain; it reads FDVLEKLGEG…ATQLLQHPFI (252 aa). ATP contacts are provided by residues 32-40 and lysine 55; that span reads LGEGSYGSV. Aspartate 145 acts as the Proton acceptor in catalysis. Threonine 179 bears the Phosphothreonine; by autocatalysis mark. 2 coiled-coil regions span residues 286–328 and 443–476; these read LRDL…TMVK and NLDF…AKRQ. Basic and acidic residues predominate over residues 297-307; the sequence is KAKRQQEQQRE. The disordered stretch occupies residues 297 to 339; that stretch reads KAKRQQEQQRELEEDDENSEEEVEVDSHTMVKSGSESAGTMRA. The span at 308 to 320 shows a compositional bias: acidic residues; the sequence is LEEDDENSEEEVE. Polar residues predominate over residues 326–339; that stretch reads MVKSGSESAGTMRA. Residues 438 to 485 form the SARAH domain; sequence FDFLKNLDFEELQMRLTALDPMMEREIEELRQRYTAKRQPILDAMDAK.

It belongs to the protein kinase superfamily. STE Ser/Thr protein kinase family. STE20 subfamily. Homodimer; mediated via the coiled-coil region. It depends on Mg(2+) as a cofactor.

The protein resides in the cytoplasm. It is found in the nucleus. The enzyme catalyses L-seryl-[protein] + ATP = O-phospho-L-seryl-[protein] + ADP + H(+). The catalysed reaction is L-threonyl-[protein] + ATP = O-phospho-L-threonyl-[protein] + ADP + H(+). Inhibited by the C-terminal non-catalytic region. Activated by caspase-cleavage. Full activation also requires homodimerization and autophosphorylation of Thr-179. Its function is as follows. Stress-activated, pro-apoptotic kinase which, following caspase-cleavage, enters the nucleus and induces chromatin condensation followed by internucleosomal DNA fragmentation. Key component of the Hippo signaling pathway which plays a pivotal role in organ size control and tumor suppression by restricting proliferation and promoting apoptosis. The core of this pathway is composed of a kinase cascade wherein stk3/mst2 and stk4/mst1, in complex with its regulatory protein sav1, phosphorylates and activates lats1/2 in complex with its regulatory protein mob1, which in turn phosphorylates and inactivates yap1 oncoprotein and wwtr1/taz. Phosphorylation of yap1 by lats2 inhibits its translocation into the nucleus to regulate cellular genes important for cell proliferation, cell death, and cell migration. The polypeptide is Serine/threonine-protein kinase 3 (stk3) (Danio rerio (Zebrafish)).